The primary structure comprises 1436 residues: tRNA (guanosine(18)-2'-O)-methyltransferase (1436 aa).

S-adenosyl-L-methionine-binding positions include Leu-1365–Gln-1367, Gly-1389, and Ile-1409–Met-1418.

This sequence belongs to the class IV-like SAM-binding methyltransferase superfamily. RNA methyltransferase TrmH family.

It localises to the cytoplasm. It carries out the reaction guanosine(18) in tRNA + S-adenosyl-L-methionine = 2'-O-methylguanosine(18) in tRNA + S-adenosyl-L-homocysteine + H(+). In terms of biological role, S-adenosyl-L-methionine-dependent 2'-O-ribose methyltransferase that catalyzes the formation of 2'-O-methylguanosine at position 18 (Gm18) in various tRNAs. This Saccharomyces cerevisiae (strain ATCC 204508 / S288c) (Baker's yeast) protein is tRNA (guanosine(18)-2'-O)-methyltransferase.